The chain runs to 577 residues: Arginine--tRNA ligase (577 aa).

The 'HIGH' region motif lies at 122 to 132; it reads PNVAKEMHVGH.

This sequence belongs to the class-I aminoacyl-tRNA synthetase family. As to quaternary structure, monomer.

It localises to the cytoplasm. The enzyme catalyses tRNA(Arg) + L-arginine + ATP = L-arginyl-tRNA(Arg) + AMP + diphosphate. This chain is Arginine--tRNA ligase, found in Escherichia coli O127:H6 (strain E2348/69 / EPEC).